Here is a 98-residue protein sequence, read N- to C-terminus: Putative zinc finger protein ORF98b (98 aa).

A C2H2-type zinc finger spans residues 54–77 (GFCPYCHNHYRTFGILANHIMRSH).

The sequence is that of Putative zinc finger protein ORF98b from Acidianus convivator (ATV).